Consider the following 1007-residue polypeptide: Serine/threonine-protein kinase PRP4 homolog (1007 aa).

Polar residues predominate over residues Met1–Arg10. The disordered stretch occupies residues Met1–Lys99. Position 2 is an N-acetylalanine (Ala2). Phosphoserine occurs at positions 8, 20, 23, and 32. Composition is skewed to basic residues over residues Lys39 to His59 and Lys67 to Lys81. Basic and acidic residues predominate over residues Glu82 to Gly91. Phosphoserine occurs at positions 87 and 93. Lys99 bears the N6-acetyllysine; alternate mark. Lys99 participates in a covalent cross-link: Glycyl lysine isopeptide (Lys-Gly) (interchain with G-Cter in SUMO2); alternate. Lys111 participates in a covalent cross-link: Glycyl lysine isopeptide (Lys-Gly) (interchain with G-Cter in SUMO2). Lys117 participates in a covalent cross-link: Glycyl lysine isopeptide (Lys-Gly) (interchain with G-Cter in SUMO2); alternate. Residue Lys117 forms a Glycyl lysine isopeptide (Lys-Gly) (interchain with G-Cter in SUMO1); alternate linkage. Ser131 bears the Phosphoserine mark. The residue at position 140 (Tyr140) is a Phosphotyrosine. Disordered regions lie at residues Tyr140 to Asp533 and Ser559 to Asp583. A phosphoserine mark is found at Ser142, Ser144, and Ser166. The span at Gly157–Lys168 shows a compositional bias: low complexity. Residues Lys170 and Lys177 each participate in a glycyl lysine isopeptide (Lys-Gly) (interchain with G-Cter in SUMO2) cross-link. 2 stretches are compositionally biased toward basic residues: residues Thr179–Lys202 and Arg214–Ser230. Phosphoserine occurs at positions 239, 241, 257, 277, 283, 292, and 294. Over residues Arg247 to Lys270 the composition is skewed to basic and acidic residues. Positions Ser302–Lys315 are enriched in basic residues. The segment covering Arg316–Pro325 has biased composition (basic and acidic residues). Phosphoserine occurs at positions 328, 354, 356, 366, and 368. Over residues Pro342 to Arg367 the composition is skewed to basic residues. Thr385 is modified (phosphothreonine). Ser387 is modified (phosphoserine). Composition is skewed to basic and acidic residues over residues Arg395–Arg408 and Arg415–Asp429. Residues Ser427, Ser431, and Ser437 each carry the phosphoserine modification. Over residues Pro438–Ser497 the composition is skewed to basic residues. A phosphoserine mark is found at Ser518, Ser519, Ser520, Ser565, Ser569, Ser578, and Ser580. A compositionally biased stretch (acidic residues) spans Ser518 to Asp533. The span at Ser562 to Pro581 shows a compositional bias: low complexity. Glycyl lysine isopeptide (Lys-Gly) (interchain with G-Cter in SUMO2) cross-links involve residues Lys593 and Lys659. Residues Tyr687 to Ile1003 enclose the Protein kinase domain. Residues Thr693–Val701 and Lys717 contribute to the ATP site. The residue at position 717 (Lys717) is an N6-acetyllysine. Asp815 functions as the Proton acceptor in the catalytic mechanism. Tyr849 bears the Phosphotyrosine mark. Ser852 is subject to Phosphoserine.

Belongs to the protein kinase superfamily. CMGC Ser/Thr protein kinase family. Interacts with CLK1 C-terminus. Associates with the U5 snRNP and NCOR1 deacetylase complexes. Identified in the spliceosome C complex. In terms of processing, phosphorylated by CLK1. Autophosphorylated; phosphorylation inhibits interaction with its targets, such as PRPF6 or SMARCA4.

It is found in the nucleus. It localises to the chromosome. The protein resides in the centromere. Its subcellular location is the kinetochore. It carries out the reaction L-seryl-[protein] + ATP = O-phospho-L-seryl-[protein] + ADP + H(+). It catalyses the reaction L-threonyl-[protein] + ATP = O-phospho-L-threonyl-[protein] + ADP + H(+). Its function is as follows. Serine/threonine kinase involved in spliceosomal assembly as well as mitosis and signaling regulation. Connects chromatin mediated regulation of transcription and pre-mRNA splicing. During spliceosomal assembly, interacts with and phosphorylates PRPF6 and PRPF31, components of the U4/U6-U5 tri-small nuclear ribonucleoprotein (snRNP), to facilitate the formation of the spliceosome B complex. Plays a role in regulating transcription and the spindle assembly checkpoint (SAC). Associates with U5 snRNP and NCOR1 deacetylase complexes which may allow a coordination of pre-mRNA splicing with chromatin remodeling events involved in transcriptional regulation. Associates and probably phosphorylates SMARCA4 and NCOR1. Phosphorylates SRSF1. Associates with kinetochores during mitosis and is necessary for recruitment and maintenance of the checkpoint proteins such as MAD1L1 and MAD12L1 at the kinetochores. Phosphorylates and regulates the activity of the transcription factors such as ELK1 and KLF13. Phosphorylates nuclear YAP1 and WWTR1/TAZ which induces nuclear exclusion and regulates Hippo signaling pathway, involved in tissue growth control. The polypeptide is Serine/threonine-protein kinase PRP4 homolog (PRP4K) (Pongo abelii (Sumatran orangutan)).